We begin with the raw amino-acid sequence, 128 residues long: Large ribosomal subunit protein uL22 (128 aa).

This sequence belongs to the universal ribosomal protein uL22 family. As to quaternary structure, part of the 50S ribosomal subunit.

Functionally, this protein binds specifically to 23S rRNA; its binding is stimulated by other ribosomal proteins, e.g. L4, L17, and L20. It is important during the early stages of 50S assembly. It makes multiple contacts with different domains of the 23S rRNA in the assembled 50S subunit and ribosome. Its function is as follows. The globular domain of the protein is located near the polypeptide exit tunnel on the outside of the subunit, while an extended beta-hairpin is found that lines the wall of the exit tunnel in the center of the 70S ribosome. This chain is Large ribosomal subunit protein uL22, found in Prochlorococcus marinus (strain AS9601).